A 204-amino-acid chain; its full sequence is MRYTSAAIEALIDAFAKLPGVGRKTARRLAMHVLQQPRLEAERLASALLDAKDLVVRCSICQNVTDRDADPCRICTGQGRDQSVICVVESPVDVLAFEKTAHYKGLYHVLHGVISPLDGIGPDDINIRELLQRLQPEEGGEVREIVLALNPTVEGETTSLYLSRLIAPLGIMVTKIARGIPVGAELEFIDEATLSRAMEGRTTF.

The C4-type zinc finger occupies 58–75 (CSICQNVTDRDADPCRIC). Residues 83 to 181 (SVICVVESPV…MVTKIARGIP (99 aa)) enclose the Toprim domain.

It belongs to the RecR family.

Its function is as follows. May play a role in DNA repair. It seems to be involved in an RecBC-independent recombinational process of DNA repair. It may act with RecF and RecO. The protein is Recombination protein RecR of Chlorobium phaeovibrioides (strain DSM 265 / 1930) (Prosthecochloris vibrioformis (strain DSM 265)).